The following is a 623-amino-acid chain: MAIQTQLPCDGDGVCMRCQVNPPSEETLTCGTCVTPWHVSCLLPESLASSTGDWECPDCSGVVVPSAAPGTGISGPESSGSVLVTAIRAIQADVTLTEAEKAKKRQRLMSGGGDDGVDDEEKKKLEIFCSICIQLPERPVTTPCGHNFCLKCFEKWAVGQGKLTCMICRSKIPRHVAKNPRINLALVSAIRLANVTKCSGEATAAKVHHIIRNQDRPDKAFTTERAVKTGKANAASGKFFVTIPRDHFGPIPAANDVTRNQGVLVGESWEDRQECRQWGVHFPHVAGIAGQAAVGAQSVALSGGYDDDEDHGEWFLYTGSGGRDLSGNKRVNKIQSSDQAFKNMNEALRLSCKMGYPVRVVRSWKEKRSAYAPAEGVRYDGVYRIEKCWSNVGVQGLHKMCRYLFVRCDNEPAPWTSDEHGDRPRPLPDVPELENATDLFVRKESPSWGFDEAEGRWKWMKSPPVSRMALDTEERKKNKRAKKGNNAMKARLLKEFSCQICRKVLSLPVTTPCAHNFCKACLEAKFAGITQLRDRSNGVRKLRAKKNIMTCPCCTTDLSEFLQNPQVNREMMEIIENFKKSEEEAEVAESSNISEEEGEEESEPPTKKIKMDKNSVGGTSLSA.

The PHD-type zinc-finger motif lies at Asp12–Val62. The RING-type 1 zinc finger occupies Cys129–Arg169. Positions Thr258–Arg407 constitute a YDG domain. The RING-type 2 zinc-finger motif lies at Cys498 to Thr555. Residues Lys580 to Ala623 form a disordered region. Positions Ser594 to Glu603 are enriched in acidic residues. The segment covering Pro604 to Lys613 has biased composition (basic and acidic residues).

Expressed in inflorescences.

Its subcellular location is the nucleus. It catalyses the reaction S-ubiquitinyl-[E2 ubiquitin-conjugating enzyme]-L-cysteine + [acceptor protein]-L-lysine = [E2 ubiquitin-conjugating enzyme]-L-cysteine + N(6)-ubiquitinyl-[acceptor protein]-L-lysine.. The protein operates within protein modification; protein ubiquitination. Its function is as follows. E3 ubiquitin-protein ligase. Participates in CpG methylation-dependent transcriptional regulation and epigenetic transcriptional silencing. Mediates ubiquitination with the E2 ubiquitin-conjugating enzyme UBC11. The chain is E3 ubiquitin-protein ligase ORTHRUS 5 (ORTH5) from Arabidopsis thaliana (Mouse-ear cress).